The following is a 352-amino-acid chain: Maleylacetate reductase (352 aa).

The protein belongs to the iron-containing alcohol dehydrogenase family.

The catalysed reaction is 3-oxoadipate + NAD(+) = maleylacetate + NADH + H(+). It carries out the reaction 3-oxoadipate + NADP(+) = maleylacetate + NADPH + H(+). The protein operates within xenobiotic degradation; (2,4,5-trichlorophenoxy)acetate degradation. The sequence is that of Maleylacetate reductase (tftE) from Burkholderia cepacia (Pseudomonas cepacia).